The sequence spans 277 residues: MPRLHDHFWSCSCAHSARRRGPPRASAAGLAAKVGEMINVSVSGPSLLAAHGAPDADPAPRGRSAAMSGPEPGSPYPNTWHHRLLQRSLVLFSVGVVLALVLNLLQIQRNVTLFPEEVIATIFSSAWWVPPCCGTAAAVVGLLYPCIDSHLGEPHKFKREWASVMRCIAVFVGINHASAKLDFANNVQLSLTLAALSLGLWWTFDRSRSGLGLGITIAFLATLITQFLVYNGVYQYTSPDFLYIRSWLPCIFFSGGVTVGNIGRQLAMGVPEKPHSD.

The Cytoplasmic segment spans residues Met-1–Leu-84. Residues His-51–Ala-66 are compositionally biased toward low complexity. The segment at His-51 to Gly-73 is disordered. A helical transmembrane segment spans residues Leu-85–Ile-107. The Lumenal segment spans residues Gln-108–Ala-126. The chain crosses the membrane as a helical span at residues Trp-127–Tyr-144. The Cytoplasmic segment spans residues Pro-145–Arg-159. Glycyl lysine isopeptide (Lys-Gly) (interchain with G-Cter in ubiquitin) cross-links involve residues Lys-156 and Lys-158. A helical membrane pass occupies residues Glu-160–Asp-182. Topologically, residues Phe-183–Asn-185 are lumenal. A helical membrane pass occupies residues Asn-186–Phe-204. The Cytoplasmic portion of the chain corresponds to Asp-205–Ser-209. Position 207 is a phosphoserine; by PCK1 (Ser-207). Residues Gly-210–Asn-231 form a helical membrane-spanning segment. The Lumenal segment spans residues Gly-232 to Arg-245. A helical membrane pass occupies residues Ser-246–Gly-263. Residues Arg-264–Asp-277 lie on the Cytoplasmic side of the membrane. The short motif at Pro-271–Asp-277 is the KxHxx element.

The protein belongs to the INSIG family. Interacts with SCAP; interaction is direct and only takes place in the presence of sterols; it prevents interaction between SCAP and the coat protein complex II (COPII). Associates with the SCAP-SREBP complex (composed of SCAP and SREBF1/SREBP1 or SREBF2/SREBP2); association is mediated via its interaction with SCAP and only takes place in the presence of sterols. Interaction with SCAP is mutually exclusive with PAQR3. Interacts with HMGCR (via its SSD); the interaction, accelerated by sterols, leads to the recruitment of HMGCR to AMFR/gp78 for its ubiquitination by the sterol-mediated ERAD pathway. Interacts with AMFR/gp78 (via its membrane domain); the interaction recruits HMCR at the ER membrane for its ubiquitination and degradation by the sterol-mediated ERAD pathway. Interacts with SOAT2/ACAT2; leading to promote recruitment of AMFR/gp78 and subsequent ubiquitination of SOAT2/ACAT2. Interacts with RNF139. Interacts with RNF145. Phosphorylation at Ser-207 by PCK1 reduces binding to oxysterol, disrupting the interaction between INSIG1 and SCAP, thereby promoting nuclear translocation of SREBP proteins (SREBF1/SREBP1 or SREBF2/SREBP2) and subsequent transcription of downstream lipogenesis-related genes. Post-translationally, ubiquitinated by AMFR/gp78 in response to sterol deprivation, leading to its degradation: when the SCAP-SREBP complex becomes dissociated from INSIG1, INSIG1 is then ubiquitinated and degraded in proteasomes. Although ubiquitination is required for rapid INSIG1 degradation, it is not required for release of the SCAP-SREBP complex. Ubiquitinated by RNF139. In terms of tissue distribution, expressed in all tissues tested with highest expression in the liver.

It localises to the endoplasmic reticulum membrane. Oxysterol-binding protein that mediates feedback control of cholesterol synthesis by controlling both endoplasmic reticulum to Golgi transport of SCAP and degradation of HMGCR. Acts as a negative regulator of cholesterol biosynthesis by mediating the retention of the SCAP-SREBP complex in the endoplasmic reticulum, thereby blocking the processing of sterol regulatory element-binding proteins (SREBPs) SREBF1/SREBP1 and SREBF2/SREBP2. Binds oxysterol, including 25-hydroxycholesterol, regulating interaction with SCAP and retention of the SCAP-SREBP complex in the endoplasmic reticulum. In presence of oxysterol, interacts with SCAP, retaining the SCAP-SREBP complex in the endoplasmic reticulum, thereby preventing SCAP from escorting SREBF1/SREBP1 and SREBF2/SREBP2 to the Golgi. Sterol deprivation or phosphorylation by PCK1 reduce oxysterol-binding, disrupting the interaction between INSIG1 and SCAP, thereby promoting Golgi transport of the SCAP-SREBP complex, followed by processing and nuclear translocation of SREBF1/SREBP1 and SREBF2/SREBP2. Also regulates cholesterol synthesis by regulating degradation of HMGCR: initiates the sterol-mediated ubiquitin-mediated endoplasmic reticulum-associated degradation (ERAD) of HMGCR via recruitment of the reductase to the ubiquitin ligases AMFR/gp78 and/or RNF139. Also regulates degradation of SOAT2/ACAT2 when the lipid levels are low: initiates the ubiquitin-mediated degradation of SOAT2/ACAT2 via recruitment of the ubiquitin ligases AMFR/gp78. The chain is Insulin-induced gene 1 protein from Homo sapiens (Human).